The following is a 392-amino-acid chain: Speckle-type POZ protein-like (392 aa).

The 131-residue stretch at 31–161 (KFSYMWTINN…DDKLTLFCEV (131 aa)) folds into the MATH domain. A BTB domain is found at 200–267 (TDCCFFVRGK…VYTGKAPNLD (68 aa)).

Belongs to the Tdpoz family. As to quaternary structure, homodimer. Heterodimer with SPOP. Component of cullin-RING-based BCR (BTB-CUL3-RBX1) E3 ubiquitin-protein ligase complexes containing homodimeric SPOPL or the heterodimer formed by SPOP and SPOPL. Interacts with CUL3 and MACROH2A1.

It is found in the nucleus. The protein operates within protein modification; protein ubiquitination. In terms of biological role, component of a cullin-RING-based BCR (BTB-CUL3-RBX1) E3 ubiquitin-protein ligase complex that mediates the ubiquitination and subsequent proteasomal degradation of target proteins, but with relatively low efficiency. Cullin-RING-based BCR (BTB-CUL3-RBX1) E3 ubiquitin-protein ligase complexes containing homodimeric SPOPL or the heterodimer formed by SPOP and SPOPL are less efficient than ubiquitin ligase complexes containing only SPOP. May function to down-regulate the activity of cullin-RING-based BCR (BTB-CUL3-RBX1) E3 ubiquitin-protein ligase complexes that contain SPOP. The protein is Speckle-type POZ protein-like (Spopl) of Mus musculus (Mouse).